Consider the following 297-residue polypeptide: SH2 domain-containing protein 6 (297 aa).

2 disordered regions span residues 1 to 61 and 74 to 93; these read MSCP…FPTR and MNPQ…RGTS. A compositionally biased stretch (pro residues) spans 36–45; sequence PSKPPLPPPQ. Residues 187–295 enclose the SH2 domain; it reads WYSGNCDRQS…RGLTYLRFPT (109 aa).

This is SH2 domain-containing protein 6 (Sh2d6) from Mus musculus (Mouse).